The following is a 102-amino-acid chain: RNA-binding protein Hfq (102 aa).

The Sm domain occupies 9–68 (DPFLNALRRERVPVSIYLVNGIKLQGQIESFDQFVILLKNTVSQMVYKHAISTVVPSRPV). Residues 63 to 102 (VPSRPVSHHSNNAGGGASNNYHHGSNAQGSTAQQDSEETE) are disordered. Residues 70–88 (HHSNNAGGGASNNYHHGSN) are compositionally biased toward low complexity.

The protein belongs to the Hfq family. As to quaternary structure, homohexamer.

RNA chaperone that binds small regulatory RNA (sRNAs) and mRNAs to facilitate mRNA translational regulation in response to envelope stress, environmental stress and changes in metabolite concentrations. Also binds with high specificity to tRNAs. This is RNA-binding protein Hfq from Salmonella agona (strain SL483).